Reading from the N-terminus, the 494-residue chain is MDKILYDALTFDDVLLVPAYSNVLPKETVVKSRVTRNIEVNLPLVSAAMDTVTEAELAIALARAGGIGIIHKNLSIDVQARHVAKVKRFESGIIRNPITLFEDATIQEAIDLMLRHSISGIPVVERPTPEGCLLLKGIVTNRDLRMTTSSNEKITTIMTTDLITAQEDIDLLAAEEILMQNKIEKLLVIDEEGYLKGLITFKDIQKRKQCPDACKDMHGRLRVGAAVGIRSNTITRVDALVEAGVDVVAVDTAHGHSQAVLDMVATIKEKYPELEVIAGNVATPEAVRDLVKAGADAVKVGIGPGSICTTRVVAGVGMPQLTAIMNCAKEAAKTDTPIIADGGIKYSGDISKALAAGADTVMMGSIFAGTDESPGETILYEGRRFKAYRGMGSLGAMSEPEGSSDRYFQDASAETKKYVPEGIEGRIPAKGPLDEVVYQLIGGLKSSMGYCGVKNIEELKKNTRFVRITSAGLRESHPHDVMITREAPNYSTSH.

CBS domains are found at residues 93 to 154 (IIRN…NEKI) and 158 to 217 (MTTD…CKDM). Residues D251 and 301 to 303 (GIG) each bind NAD(+). Residues G303 and G305 each contribute to the K(+) site. Residue S306 coordinates IMP. C308 provides a ligand contact to K(+). C308 functions as the Thioimidate intermediate in the catalytic mechanism. IMP contacts are provided by residues 341–343 (DGG), 364–365 (GS), and 388–392 (YRGMG). R406 acts as the Proton acceptor in catalysis. E421 provides a ligand contact to IMP. The K(+) site is built by E475, S476, and H477.

The protein belongs to the IMPDH/GMPR family. As to quaternary structure, homotetramer. Requires K(+) as cofactor.

It catalyses the reaction IMP + NAD(+) + H2O = XMP + NADH + H(+). It participates in purine metabolism; XMP biosynthesis via de novo pathway; XMP from IMP: step 1/1. Its activity is regulated as follows. Mycophenolic acid (MPA) is a non-competitive inhibitor that prevents formation of the closed enzyme conformation by binding to the same site as the amobile flap. In contrast, mizoribine monophosphate (MZP) is a competitive inhibitor that induces the closed conformation. MPA is a potent inhibitor of mammalian IMPDHs but a poor inhibitor of the bacterial enzymes. MZP is a more potent inhibitor of bacterial IMPDH. Functionally, catalyzes the conversion of inosine 5'-phosphate (IMP) to xanthosine 5'-phosphate (XMP), the first committed and rate-limiting step in the de novo synthesis of guanine nucleotides, and therefore plays an important role in the regulation of cell growth. This chain is Inosine-5'-monophosphate dehydrogenase, found in Chlorobaculum parvum (strain DSM 263 / NCIMB 8327) (Chlorobium vibrioforme subsp. thiosulfatophilum).